The primary structure comprises 263 residues: MLTITAIKAFNDNYIWVLQQQPHTQVYVVDPGDASVVIDYLEANQLTLVGILLTHHHNDHTGGVAELQAYSQDRLTVYGPDNEKIEGITHPLHATAQPRFTLDYISGELQVLDVPGHTAGHIAYVIADALFCGDTLFSGGCGRLFEGTPAQMLNSLQQLAQLPAYTRVYCAHEYTLSNLKFALAVNPNNCALQDYNERAIALRRQDKATIPSTIALERAINPFLRASDTEIVGSIKQHFSDLSHANLDELGGFTLLRQWKDNF.

The Zn(2+) site is built by His55, His57, Asp59, His60, His117, Asp134, and His172.

It belongs to the metallo-beta-lactamase superfamily. Glyoxalase II family. In terms of assembly, monomer. Zn(2+) is required as a cofactor.

It carries out the reaction an S-(2-hydroxyacyl)glutathione + H2O = a 2-hydroxy carboxylate + glutathione + H(+). It functions in the pathway secondary metabolite metabolism; methylglyoxal degradation; (R)-lactate from methylglyoxal: step 2/2. Functionally, thiolesterase that catalyzes the hydrolysis of S-D-lactoyl-glutathione to form glutathione and D-lactic acid. The protein is Hydroxyacylglutathione hydrolase of Shewanella baltica (strain OS195).